The sequence spans 394 residues: Flavohemoprotein (394 aa).

In terms of domain architecture, Globin spans 1–136; the sequence is MLSENTINIV…LANVFIQREE (136 aa). Position 85 (His-85) interacts with heme b. Active-site charge relay system residues include Tyr-95 and Glu-135. A reductase region spans residues 147-394; the sequence is GGWRGLREFE…YECFGPHKVV (248 aa). The region spanning 150–255 is the FAD-binding FR-type domain; that stretch reads RGLREFELVE…AAPAGDFFLD (106 aa). FAD-binding positions include Tyr-188 and 204–207; that span reads RQYS. NADP(+) is bound at residue 268–273; it reads GVGLTP. 387 to 390 contributes to the FAD binding site; the sequence is CFGP.

It belongs to the globin family. Two-domain flavohemoproteins subfamily. This sequence in the C-terminal section; belongs to the flavoprotein pyridine nucleotide cytochrome reductase family. Heme b is required as a cofactor. The cofactor is FAD.

It catalyses the reaction 2 nitric oxide + NADPH + 2 O2 = 2 nitrate + NADP(+) + H(+). The enzyme catalyses 2 nitric oxide + NADH + 2 O2 = 2 nitrate + NAD(+) + H(+). Its function is as follows. Is involved in NO detoxification in an aerobic process, termed nitric oxide dioxygenase (NOD) reaction that utilizes O(2) and NAD(P)H to convert NO to nitrate, which protects the bacterium from various noxious nitrogen compounds. Therefore, plays a central role in the inducible response to nitrosative stress. This chain is Flavohemoprotein, found in Vibrio vulnificus (strain CMCP6).